A 295-amino-acid polypeptide reads, in one-letter code: 4-hydroxy-tetrahydrodipicolinate synthase (295 aa).

Position 47 (T47) interacts with pyruvate. Y135 functions as the Proton donor/acceptor in the catalytic mechanism. The active-site Schiff-base intermediate with substrate is the K163. I206 provides a ligand contact to pyruvate.

This sequence belongs to the DapA family. As to quaternary structure, homodimer.

Its subcellular location is the cytoplasm. It carries out the reaction L-aspartate 4-semialdehyde + pyruvate = (2S,4S)-4-hydroxy-2,3,4,5-tetrahydrodipicolinate + H2O + H(+). It participates in amino-acid biosynthesis; L-lysine biosynthesis via DAP pathway; (S)-tetrahydrodipicolinate from L-aspartate: step 3/4. Catalyzes the condensation of (S)-aspartate-beta-semialdehyde [(S)-ASA] and pyruvate to 4-hydroxy-tetrahydrodipicolinate (HTPA). The sequence is that of 4-hydroxy-tetrahydrodipicolinate synthase from Staphylococcus aureus (strain MSSA476).